A 441-amino-acid polypeptide reads, in one-letter code: Ribosomal protein uS12 methylthiotransferase RimO (441 aa).

The 111-residue stretch at P8–P118 folds into the MTTase N-terminal domain. [4Fe-4S] cluster contacts are provided by C17, C53, C82, C150, C154, and C157. The 238-residue stretch at L136–E373 folds into the Radical SAM core domain. Positions Q376–V441 constitute a TRAM domain.

It belongs to the methylthiotransferase family. RimO subfamily. The cofactor is [4Fe-4S] cluster.

It is found in the cytoplasm. It catalyses the reaction L-aspartate(89)-[ribosomal protein uS12]-hydrogen + (sulfur carrier)-SH + AH2 + 2 S-adenosyl-L-methionine = 3-methylsulfanyl-L-aspartate(89)-[ribosomal protein uS12]-hydrogen + (sulfur carrier)-H + 5'-deoxyadenosine + L-methionine + A + S-adenosyl-L-homocysteine + 2 H(+). Functionally, catalyzes the methylthiolation of an aspartic acid residue of ribosomal protein uS12. In Citrobacter koseri (strain ATCC BAA-895 / CDC 4225-83 / SGSC4696), this protein is Ribosomal protein uS12 methylthiotransferase RimO.